Consider the following 388-residue polypeptide: Alanine racemase (388 aa).

Lys44 acts as the Proton acceptor; specific for D-alanine in catalysis. Residue Lys44 is modified to N6-(pyridoxal phosphate)lysine. Arg142 is a substrate binding site. Tyr273 serves as the catalytic Proton acceptor; specific for L-alanine. Met321 serves as a coordination point for substrate.

This sequence belongs to the alanine racemase family. Requires pyridoxal 5'-phosphate as cofactor.

It carries out the reaction L-alanine = D-alanine. It participates in amino-acid biosynthesis; D-alanine biosynthesis; D-alanine from L-alanine: step 1/1. Catalyzes the interconversion of L-alanine and D-alanine. May also act on other amino acids. The protein is Alanine racemase (alr) of Mycobacterium avium (strain 104).